The chain runs to 212 residues: U8 snoRNA-decapping enzyme (212 aa).

The segment at 1 to 23 (MAESRSPDRGAKEDKPRPRNISR) is disordered. Residues His37, Arg63, and Phe70 each contribute to the substrate site. In terms of domain architecture, Nudix hydrolase spans 39–187 (LLHAPSQAKL…IGNSKSQLLY (149 aa)). Positions 72, 89, 93, and 150 each coordinate Mn(2+). The Nudix box motif lies at 74 to 95 (FVDTRDISLEEGLKRELEEELG). The substrate site is built by Asn180 and Gln184.

The protein belongs to the Nudix hydrolase family. NUDT16 subfamily. Homodimer. Mg(2+) serves as cofactor. Requires Mn(2+) as cofactor. It depends on Co(2+) as a cofactor. In terms of tissue distribution, detected in ovary, and at very low levels in epithelial cells (at protein level).

The protein localises to the nucleus. The protein resides in the nucleolus. Its subcellular location is the nucleoplasm. It localises to the cytoplasm. The enzyme catalyses a 5'-end (N(7)-methyl 5'-triphosphoguanosine)-ribonucleoside in mRNA + H2O = N(7)-methyl-GDP + a 5'-end phospho-ribonucleoside in mRNA + 2 H(+). It catalyses the reaction IDP + H2O = IMP + phosphate + H(+). The catalysed reaction is dIDP + H2O = dIMP + phosphate + H(+). It carries out the reaction a 5'-end NAD(+)-phospho-ribonucleoside in mRNA + H2O = a 5'-end phospho-ribonucleoside in mRNA + NAD(+) + H(+). The enzyme catalyses a 5'-end FAD-phospho-ribonucleoside in mRNA + H2O = a 5'-end phospho-adenosine-phospho-ribonucleoside in mRNA + FMN + 2 H(+). It catalyses the reaction a 5'-end CoA-ribonucleoside in mRNA + H2O = a 5'-end phospho-adenosine-phospho-ribonucleoside in mRNA + (R)-4'-phosphopantetheine + 2 H(+). Its function is as follows. RNA-binding and decapping enzyme that catalyzes the cleavage of the cap structure of snoRNAs and mRNAs in a metal-dependent manner. Part of the U8 snoRNP complex that is required for the accumulation of mature 5.8S and 28S rRNA. Has diphosphatase activity and removes m7G and/or m227G caps from U8 snoRNA and leaves a 5'monophosphate on the RNA. Also catalyzes the cleavage of the cap structure on mRNAs. Does not hydrolyze cap analog structures like 7-methylguanosine nucleoside triphosphate (m7GpppG). Also hydrolysis m7G- and m227G U3-capped RNAs but with less efficiencies. Has broad substrate specificity with manganese or cobalt as cofactor and can act on various RNA species. Binds to the U8 snoRNA; metal is not required for RNA-binding. May play a role in the regulation of snoRNAs and mRNAs degradation. Also acts as a phosphatase; hydrolyzes the non-canonical purine nucleotides inosine diphosphate (IDP) and deoxyinosine diphosphate (dITP) as well as guanosine diphosphate (GDP), deoxyguanosine diphosphate (dGDP), xanthine diphosphate (XDP), inosine triphosphate (ITP) and deoxyinosine triphosphate (ITP) to their respective monophosphate derivatives and does not distinguish between the deoxy- and ribose forms. The order of activity with different substrates is IDP &gt; dIDP &gt;&gt; GDP = dGDP &gt; XDP = ITP = dITP. Binds strongly to GTP, ITP and XTP. Participates in the hydrolysis of dIDP/IDP and probably excludes non-canonical purines from RNA and DNA precursor pools, thus preventing their incorporation into RNA and DNA and avoiding chromosomal lesions. Exhibits decapping activity towards NAD-capped RNAs and FAD-capped RNAs. Exhibits decapping activity towards dpCoA-capped RNAs in vitro. The chain is U8 snoRNA-decapping enzyme (nudt16) from Xenopus laevis (African clawed frog).